The primary structure comprises 341 residues: Phosphatidylserine decarboxylase proenzyme (341 aa).

Residues aspartate 90, histidine 147, and serine 254 each act as charge relay system; for autoendoproteolytic cleavage activity in the active site. The active-site Schiff-base intermediate with substrate; via pyruvic acid; for decarboxylase activity is the serine 254. Residue serine 254 is modified to Pyruvic acid (Ser); by autocatalysis. The disordered stretch occupies residues 287–341 (RQDEQTPVVFPEGTELEENDAAQPPVAATSEPVQADGQNPAAEVSGQTGHKPDAP).

This sequence belongs to the phosphatidylserine decarboxylase family. PSD-B subfamily. Prokaryotic type I sub-subfamily. In terms of assembly, heterodimer of a large membrane-associated beta subunit and a small pyruvoyl-containing alpha subunit. It depends on pyruvate as a cofactor. Post-translationally, is synthesized initially as an inactive proenzyme. Formation of the active enzyme involves a self-maturation process in which the active site pyruvoyl group is generated from an internal serine residue via an autocatalytic post-translational modification. Two non-identical subunits are generated from the proenzyme in this reaction, and the pyruvate is formed at the N-terminus of the alpha chain, which is derived from the carboxyl end of the proenzyme. The autoendoproteolytic cleavage occurs by a canonical serine protease mechanism, in which the side chain hydroxyl group of the serine supplies its oxygen atom to form the C-terminus of the beta chain, while the remainder of the serine residue undergoes an oxidative deamination to produce ammonia and the pyruvoyl prosthetic group on the alpha chain. During this reaction, the Ser that is part of the protease active site of the proenzyme becomes the pyruvoyl prosthetic group, which constitutes an essential element of the active site of the mature decarboxylase.

It is found in the cell membrane. It catalyses the reaction a 1,2-diacyl-sn-glycero-3-phospho-L-serine + H(+) = a 1,2-diacyl-sn-glycero-3-phosphoethanolamine + CO2. Its pathway is phospholipid metabolism; phosphatidylethanolamine biosynthesis; phosphatidylethanolamine from CDP-diacylglycerol: step 2/2. Functionally, catalyzes the formation of phosphatidylethanolamine (PtdEtn) from phosphatidylserine (PtdSer). In Pectobacterium atrosepticum (strain SCRI 1043 / ATCC BAA-672) (Erwinia carotovora subsp. atroseptica), this protein is Phosphatidylserine decarboxylase proenzyme.